Here is a 513-residue protein sequence, read N- to C-terminus: Nitrate transporter 2.2 (513 aa).

The next 12 helical transmembrane spans lie at 38 to 58 (WICF…APVI), 74 to 94 (VSAV…VDVV), 98 to 118 (YGAA…ALVT), 128 to 148 (FFIG…GTMF), 158 to 178 (AIAA…MPLI), 196 to 216 (AFFV…LLGI), 247 to 265 (LGNY…SFGV), 281 to 301 (FGLN…MNIF), 323 to 343 (LWVL…MGKV), 351 to 371 (IVIM…HFGI), 383 to 403 (VSGL…AIWF), and 419 to 439 (FVWM…IWFP).

The protein belongs to the major facilitator superfamily. Nitrate/nitrite porter (TC 2.A.1.8) family.

The protein localises to the cell membrane. Functionally, involved in nitrate transport, but does not seem to be able to mediate transport by its own. Acts as a dual component transporter with NAR2 (system 2). Involved in a high affinity transport specific for nitrate. In Chlamydomonas reinhardtii (Chlamydomonas smithii), this protein is Nitrate transporter 2.2.